The sequence spans 147 residues: UPF0208 membrane protein CGSHiEE_06015 (147 aa).

2 helical membrane-spanning segments follow: residues 38–58 and 67–87; these read FAQK…QIYA and IAIL…YWLG.

This sequence belongs to the UPF0208 family.

It is found in the cell inner membrane. This Haemophilus influenzae (strain PittEE) protein is UPF0208 membrane protein CGSHiEE_06015.